The following is a 376-amino-acid chain: ATP synthase gamma chain, chloroplastic (376 aa).

The N-terminal 52 residues, 1–52, are a transit peptide targeting the chloroplast; sequence MSCSNVTMLVSSKPSLPDASNLSFRSAFNPFQLPSQNSSSSCTPSRPTSIQC. Cys133 is a catalytic residue. Cysteines 250 and 256 form a disulfide.

This sequence belongs to the ATPase gamma chain family. As to quaternary structure, F-type ATPases have 2 components, CF(1) - the catalytic core - and CF(0) - the membrane proton channel. CF(1) has five subunits: alpha(3), beta(3), gamma(1), delta(1), epsilon(1). CF(0) has four main subunits: a, b, b' and c.

It localises to the plastid. The protein resides in the chloroplast thylakoid membrane. Its function is as follows. Produces ATP from ADP in the presence of a proton gradient across the membrane. The gamma chain is believed to be important in regulating ATPase activity and the flow of protons through the CF(0) complex. This chain is ATP synthase gamma chain, chloroplastic (ATPC), found in Pisum sativum (Garden pea).